The chain runs to 283 residues: Bifunctional protein FolD (283 aa).

NADP(+) contacts are provided by residues 164–166 (GRS), serine 189, and threonine 230.

The protein belongs to the tetrahydrofolate dehydrogenase/cyclohydrolase family. Homodimer.

The enzyme catalyses (6R)-5,10-methylene-5,6,7,8-tetrahydrofolate + NADP(+) = (6R)-5,10-methenyltetrahydrofolate + NADPH. It carries out the reaction (6R)-5,10-methenyltetrahydrofolate + H2O = (6R)-10-formyltetrahydrofolate + H(+). Its pathway is one-carbon metabolism; tetrahydrofolate interconversion. In terms of biological role, catalyzes the oxidation of 5,10-methylenetetrahydrofolate to 5,10-methenyltetrahydrofolate and then the hydrolysis of 5,10-methenyltetrahydrofolate to 10-formyltetrahydrofolate. This chain is Bifunctional protein FolD, found in Dictyoglomus thermophilum (strain ATCC 35947 / DSM 3960 / H-6-12).